The sequence spans 168 residues: Cell division inhibitor SulA (168 aa).

The segment at 105–111 is ftsZ binding; that stretch reads ALETGNY. Residues 161 to 168 are lon protease binding; that stretch reads RIHSGMVH.

The protein belongs to the SulA family. In terms of assembly, interacts with FtsZ. Post-translationally, is rapidly cleaved and degraded by the Lon protease once DNA damage is repaired.

Its function is as follows. Component of the SOS system and an inhibitor of cell division. Accumulation of SulA causes rapid cessation of cell division and the appearance of long, non-septate filaments. In the presence of GTP, binds a polymerization-competent form of FtsZ in a 1:1 ratio, thus inhibiting FtsZ polymerization and therefore preventing it from participating in the assembly of the Z ring. This mechanism prevents the premature segregation of damaged DNA to daughter cells during cell division. The chain is Cell division inhibitor SulA from Cronobacter sakazakii (strain ATCC BAA-894) (Enterobacter sakazakii).